The chain runs to 344 residues: Arginine N-succinyltransferase (344 aa).

Succinyl-CoA is bound at residue leucine 125. Residue histidine 229 is the Proton donor of the active site.

This sequence belongs to the arginine N-succinyltransferase family.

It catalyses the reaction succinyl-CoA + L-arginine = N(2)-succinyl-L-arginine + CoA + H(+). Its pathway is amino-acid degradation; L-arginine degradation via AST pathway; L-glutamate and succinate from L-arginine: step 1/5. Functionally, catalyzes the transfer of succinyl-CoA to arginine to produce N(2)-succinylarginine. This Escherichia coli O6:H1 (strain CFT073 / ATCC 700928 / UPEC) protein is Arginine N-succinyltransferase.